We begin with the raw amino-acid sequence, 307 residues long: OTU domain-containing protein 2 (307 aa).

Disordered stretches follow at residues 23-46 and 96-130; these read ENKDLQNKITGMKKQATKSKRKEV and SRDEKEQQNVPVQQQQQGQTKKRRNRQKERLAKRD. Positions 103–114 are enriched in low complexity; sequence QNVPVQQQQQGQ. The 141-residue stretch at 167 to 307 folds into the OTU domain; sequence LKQFDIQPDG…GEHYNSLHDS (141 aa).

The polypeptide is OTU domain-containing protein 2 (OTU2) (Saccharomyces cerevisiae (strain ATCC 204508 / S288c) (Baker's yeast)).